The sequence spans 309 residues: D-alanine--D-alanine ligase (309 aa).

Residues 106–305 (KMLWKAFGLP…FEQLVVKILE (200 aa)) form the ATP-grasp domain. 136 to 191 (VEKLGLPVMVKPSLEGSSVGLTKVKRVEDLKSAVDFALKYDDTVLIEEWLSGAEFT) contributes to the ATP binding site. Residues aspartate 259, glutamate 272, and asparagine 274 each coordinate Mg(2+).

This sequence belongs to the D-alanine--D-alanine ligase family. It depends on Mg(2+) as a cofactor. Mn(2+) serves as cofactor.

It localises to the cytoplasm. It carries out the reaction 2 D-alanine + ATP = D-alanyl-D-alanine + ADP + phosphate + H(+). The protein operates within cell wall biogenesis; peptidoglycan biosynthesis. In terms of biological role, cell wall formation. The chain is D-alanine--D-alanine ligase from Pasteurella multocida (strain Pm70).